Consider the following 949-residue polypeptide: UvrABC system protein A (949 aa).

Gly42–Ser49 is a binding site for ATP. Residues Cys262–Cys289 form a C4-type zinc finger. 2 ABC transporter domains span residues Trp319–Val596 and Val616–Lys945. Position 649 to 656 (Gly649 to Ser656) interacts with ATP. A C4-type zinc finger spans residues Cys748–Cys774.

Belongs to the ABC transporter superfamily. UvrA family. As to quaternary structure, forms a heterotetramer with UvrB during the search for lesions.

The protein resides in the cytoplasm. In terms of biological role, the UvrABC repair system catalyzes the recognition and processing of DNA lesions. UvrA is an ATPase and a DNA-binding protein. A damage recognition complex composed of 2 UvrA and 2 UvrB subunits scans DNA for abnormalities. When the presence of a lesion has been verified by UvrB, the UvrA molecules dissociate. The sequence is that of UvrABC system protein A from Neisseria meningitidis serogroup B (strain ATCC BAA-335 / MC58).